Reading from the N-terminus, the 483-residue chain is UDP-N-acetylmuramoyl-L-alanyl-D-glutamate--2,6-diaminopimelate ligase 2 (483 aa).

S30 is a binding site for UDP-N-acetyl-alpha-D-muramoyl-L-alanyl-D-glutamate. 111–117 (GTNGKTT) contributes to the ATP binding site. UDP-N-acetyl-alpha-D-muramoyl-L-alanyl-D-glutamate is bound by residues 156–157 (TT), T183, and R191. K223 carries the post-translational modification N6-carboxylysine. Residues R380, 404–407 (DNPR), G456, and E460 each bind meso-2,6-diaminopimelate. Positions 404-407 (DNPR) match the Meso-diaminopimelate recognition motif motif.

The protein belongs to the MurCDEF family. MurE subfamily. Mg(2+) is required as a cofactor. In terms of processing, carboxylation is probably crucial for Mg(2+) binding and, consequently, for the gamma-phosphate positioning of ATP.

The protein localises to the cytoplasm. It carries out the reaction UDP-N-acetyl-alpha-D-muramoyl-L-alanyl-D-glutamate + meso-2,6-diaminopimelate + ATP = UDP-N-acetyl-alpha-D-muramoyl-L-alanyl-gamma-D-glutamyl-meso-2,6-diaminopimelate + ADP + phosphate + H(+). The protein operates within cell wall biogenesis; peptidoglycan biosynthesis. In terms of biological role, catalyzes the addition of meso-diaminopimelic acid to the nucleotide precursor UDP-N-acetylmuramoyl-L-alanyl-D-glutamate (UMAG) in the biosynthesis of bacterial cell-wall peptidoglycan. This Clostridium acetobutylicum (strain ATCC 824 / DSM 792 / JCM 1419 / IAM 19013 / LMG 5710 / NBRC 13948 / NRRL B-527 / VKM B-1787 / 2291 / W) protein is UDP-N-acetylmuramoyl-L-alanyl-D-glutamate--2,6-diaminopimelate ligase 2.